The primary structure comprises 632 residues: Nucleoside triphosphatase I (632 aa).

A Helicase ATP-binding domain is found at 42-204 (FLGLDKMHSL…VMLVNLLRPK (163 aa)). 55–62 (HETGVGKT) lines the ATP pocket. The short motif at 141–144 (DECH) is the DEXH box element. The region spanning 367–532 (KFTDVCLRIL…EFTQLFKVFK (166 aa)) is the Helicase C-terminal domain. A binding to the cap-specific mRNA (nucleoside-2'-O-)-methyltransferase region spans residues 457–524 (DIFILDMTWN…DIIRTKSKEF (68 aa)).

This sequence belongs to the helicase family. NPH I subfamily. As to quaternary structure, monomer. Interacts (via C-terminus) with RAP94 (via N-terminus). Interacts with the cap-specific mRNA (nucleoside-2'-O-)-methyltransferase.

Its subcellular location is the virion. The catalysed reaction is a ribonucleoside 5'-triphosphate + H2O = a ribonucleoside 5'-diphosphate + phosphate + H(+). Functionally, DNA-dependent ATPase required for providing the needed energy to achieve the termination of early transcripts. Acts in concert with the RAP94 subunit of the virion RNA polymerase and the capping enzyme/VTF to catalyze release of UUUUUNU-containing nascent RNA from the elongation complex. NPH-I must bind ssDNA in order to exhibit ATPase activity. The protein is Nucleoside triphosphatase I (NPH1) of Myxoma virus (strain Lausanne) (MYXV).